The following is a 116-amino-acid chain: Iron-sulfur cluster insertion protein ErpA (116 aa).

Positions 44, 108, and 110 each coordinate iron-sulfur cluster.

The protein belongs to the HesB/IscA family. As to quaternary structure, homodimer. Iron-sulfur cluster is required as a cofactor.

Its function is as follows. Required for insertion of 4Fe-4S clusters for at least IspG. The sequence is that of Iron-sulfur cluster insertion protein ErpA from Pseudomonas aeruginosa (strain LESB58).